The following is a 410-amino-acid chain: MFVRALSLRDFRSWDALGLNLRPGCTVFVGPNGHGKTNVLEALGYLSTLSSHRVSSDAPLIRTGTAQAFAGATVVNTGRELTVDLELNEGKSNRARINQSPTRRPREILGILQTVLFAPEDLSLVRGDPGDRRRYLDELLTSRIPRMAAVRADYERVLRQRSALLKTAGGALRRSSRGGGRPSEDGASALATLEVWDGHLAAHGAQLLAGRLHLVHDLAPHLAESYQSLAPESRPASIRYRSSLGSSLPPEFTAPARAPEAGDIAFLEERFLQELSVMRSKEIERGVCLVGPHRDDLELHLGDTPAKGFASHGESWSFALSLRLAGFALLRADGSDPVLMLDDVFAELDRKRRRALAKVALDAEQVLITAAVPEDVPEELDAVRFGVEARDTDRGRISHILEETEDRRDG.

30–37 contacts ATP; the sequence is GPNGHGKT.

The protein belongs to the RecF family.

It localises to the cytoplasm. The RecF protein is involved in DNA metabolism; it is required for DNA replication and normal SOS inducibility. RecF binds preferentially to single-stranded, linear DNA. It also seems to bind ATP. This Rhodococcus opacus (strain B4) protein is DNA replication and repair protein RecF.